Here is a 611-residue protein sequence, read N- to C-terminus: Nuclear cap-binding protein subunit 3 (611 aa).

Residues 1-44 are disordered; the sequence is MAAVRGLRVSVKAGGGAEPEPMEVEEGEVEAAADRASPREVVSG. Acidic residues predominate over residues 20-31; it reads EPMEVEEGEVEA. Residues 108–169 are RNA recognition motif (RRM) domain; that stretch reads ETLYVYGVDD…LSSMPTNEKG (62 aa). The WLDD motif; essential for 7-methylguanosine-containing mRNA cap binding motif lies at 137-140; it reads WLDD. 5 disordered regions span residues 159–230, 338–360, 373–393, 423–568, and 583–611; these read NLSS…PDTL, EEPIEEEEEEEEEEEDMDEDDRV, REREGARRSAASNSDSDEMDY, KTIR…DSVL, and RQKKSRLDNLPSLQIEISRESSSGSDTDS. A compositionally biased stretch (basic and acidic residues) spans 168–179; sequence KGQRKKDGEHSS. Composition is skewed to acidic residues over residues 196-218 and 339-358; these read DETEEGEVEEDNPSEAEDEDETE and EPIEEEEEEEEEEEDMDEDD. Positions 423-439 are enriched in polar residues; the sequence is KTIRNSMRSDSVGNSVK. Residues 446–463 show a composition bias toward basic and acidic residues; it reads SHAEKPADVRLILEEKRQ. A compositionally biased stretch (low complexity) spans 464–475; it reads STASRQQSSSGK. 2 stretches are compositionally biased toward basic and acidic residues: residues 501–511 and 544–556; these read SRREPLSDVHS and PKDKERPSEKSEK. Low complexity predominate over residues 602–611; it reads ESSSGSDTDS.

The protein belongs to the NCBP3 family. In terms of assembly, component of an alternative cap-binding complex (CBC) composed of NCBP1/CBP80 and NCBP3.

Its subcellular location is the nucleus. It localises to the cytoplasm. In terms of biological role, associates with NCBP1/CBP80 to form an alternative cap-binding complex (CBC) which plays a key role in mRNA export. NCBP3 serves as adapter protein linking the capped RNAs (m7GpppG-capped RNA) to NCBP1/CBP80. Unlike the conventional CBC with NCBP2 which binds both small nuclear RNA (snRNA) and messenger (mRNA) and is involved in their export from the nucleus, the alternative CBC with NCBP3 does not bind snRNA and associates only with mRNA thereby playing a role in only mRNA export. This chain is Nuclear cap-binding protein subunit 3, found in Xenopus tropicalis (Western clawed frog).